We begin with the raw amino-acid sequence, 333 residues long: MNPTLILAAFCLGIASATLTFDHSLEAQWTKWKAMHNRLYGMNEEGWRRAVWEKNMKMIELHNQEYREGKHSFTMAMNAFGDMTSEEFRQVMNGFQNRKPRKGKVFQEPLFYEAPRSVDWREKGYVTPVKNQGQCGSCWAFSATGALEGQMFRKTGRLISLSEQNLVDCSGPQGNEGCNGGLMDYAFQYVQDNGGLDSEESYPYEATEESCKYNPKYSVANDTGFVDIPKQEKALMKAVATVGPISVAIDAGHESFLFYKEGIYFEPDCSSEDMDHGVLVVGYGFESTESDNNKYWLVKNSWGEEWGMGGYVKMAKDRRNHCGIASAASYPTV.

The signal sequence occupies residues 1–17 (MNPTLILAAFCLGIASA). Positions 18 to 113 (TLTFDHSLEA…KVFQEPLFYE (96 aa)) are cleaved as a propeptide — activation peptide. Glu122 is a Zn(2+) binding site. Cystine bridges form between Cys135-Cys178 and Cys169-Cys211. Cys138 is a catalytic residue. Zn(2+) contacts are provided by Glu163, Asp184, Glu199, Glu205, and Glu209. N-linked (GlcNAc...) asparagine glycosylation is present at Asn221. Positions 227, 250, 253, 273, and 275 each coordinate Zn(2+). Cys269 and Cys322 are joined by a disulfide. His276 is a catalytic residue. Residues 289-291 (ESD) constitute a propeptide that is removed on maturation. Residue Asn300 is part of the active site.

The protein belongs to the peptidase C1 family. As to quaternary structure, dimer of a heavy and a light chain linked by disulfide bonds. Interacts with Long isoform of CD74/Ii chain; the interaction stabilizes the conformation of mature CTSL. During export along the endocytic pathway, pro-CTSL undergoes several proteolytic cleavages to generate the CTSL single-chain and two-chain mature forms, composed of a heavy chain linked to a light chain by disulfide bonds. Autocleavage; produces the single-chain CTSL after cleavage of the propeptide. The cleavage can be intermolecular.

Its subcellular location is the lysosome. The protein localises to the apical cell membrane. It localises to the cytoplasmic vesicle. The protein resides in the secretory vesicle. It is found in the chromaffin granule. Its subcellular location is the secreted. The protein localises to the extracellular space. It localises to the nucleus. It carries out the reaction Specificity close to that of papain. As compared to cathepsin B, cathepsin L exhibits higher activity toward protein substrates, but has little activity on Z-Arg-Arg-NHMec, and no peptidyl-dipeptidase activity.. With respect to regulation, inhibited by the propeptide produced by autocleavage. Long isoform of CD74/Ii chain stabilizes the conformation of mature CTSL by binding to its active site and serving as a chaperone to help maintain a pool of mature enzyme in endocytic compartments and extracellular space of APCs. IFNG enhances the conversion into the CTSL mature and active form. Inhibited by CST6. Inhibited by the glycopeptide antibiotic teicoplanin. Inhibited by amantadine. Thiol protease important for the overall degradation of proteins in lysosomes. Plays a critical for normal cellular functions such as general protein turnover, antigen processing and bone remodeling. Involved in the solubilization of cross-linked TG/thyroglobulin and in the subsequent release of thyroid hormone thyroxine (T4) by limited proteolysis of TG/thyroglobulin in the thyroid follicle lumen. In neuroendocrine chromaffin cells secretory vesicles, catalyzes the prohormone proenkephalin processing to the active enkephalin peptide neurotransmitter. In thymus, regulates CD4(+) T cell positive selection by generating the major histocompatibility complex class II (MHCII) bound peptide ligands presented by cortical thymic epithelial cells. Also mediates invariant chain processing in cortical thymic epithelial cells. Major elastin-degrading enzyme at neutral pH. Accumulates as a mature and active enzyme in the extracellular space of antigen presenting cells (APCs) to regulate degradation of the extracellular matrix in the course of inflammation. Secreted form generates endostatin from COL18A1. Critical for cardiac morphology and function. Plays an important role in hair follicle morphogenesis and cycling, as well as epidermal differentiation. Required for maximal stimulation of steroidogenesis by TIMP1. In terms of biological role, (Microbial infection) In cells lacking TMPRSS2 expression, facilitates human coronaviruses SARS-CoV and SARS-CoV-2 infections via a slow acid-activated route with the proteolysis of coronavirus spike (S) glycoproteins in lysosome for entry into host cell. Proteolysis within lysosomes is sufficient to activate membrane fusion by coronaviruses SARS-CoV and EMC (HCoV-EMC) S as well as Zaire ebolavirus glycoproteins. Functionally, functions in the regulation of cell cycle progression through proteolytic processing of the CUX1 transcription factor. Translation initiation at downstream start sites allows the synthesis of isoforms that are devoid of a signal peptide and localize to the nucleus where they cleave the CUX1 transcription factor and modify its DNA binding properties. This Homo sapiens (Human) protein is Procathepsin L.